We begin with the raw amino-acid sequence, 364 residues long: Valine dehydrogenase (364 aa).

Residue lysine 91 is part of the active site. NAD(+) is bound at residue 191 to 197 (GVGKVGH).

The protein belongs to the Glu/Leu/Phe/Val dehydrogenases family. In terms of assembly, homodimer.

It localises to the cytoplasm. It catalyses the reaction L-valine + NAD(+) + H2O = 3-methyl-2-oxobutanoate + NH4(+) + NADH + H(+). It participates in amino-acid degradation; L-valine degradation. Repressed in minimal medium by the presence of glucose and NH4(+), glycerol and NH4(+), or glycerol and asparagine. Its function is as follows. Oxidative deamination of branched-chain amino acids. Oxidizes L-valine and L-alpha-aminobutyric acid efficiently, and L-isoleucine and L-leucine less efficiently. Does not act on D-valine. The catabolism of L-valine is the major source of fatty acid precursors for macrolide biosynthesis and a vital source of antibiotic precursors. Uses NAD; no activity was found with NADP. In Streptomyces coelicolor (strain ATCC BAA-471 / A3(2) / M145), this protein is Valine dehydrogenase (vdh).